A 574-amino-acid polypeptide reads, in one-letter code: Membrane protein insertase YidC (574 aa).

Residues 6 to 26 (VFLIFAWLMVAALLWMEWGKD) traverse the membrane as a helical segment. A disordered region spans residues 45-77 (RDPDAAAPSAANVPSAQPIPQAGAPGTVPATSS). 5 consecutive transmembrane segments (helical) span residues 356–376 (FSIMAIIGQGLFWVLSHLHSF), 380–400 (WGWAIIGLVVLLRLALYPLSA), 447–467 (GGCLPLLIQMPIFFALYWVLV), 489–509 (PYFILPLLNISIMWATQKLTP), and 525–545 (PLVFGVMMAFMPAGLVLYWVV).

This sequence belongs to the OXA1/ALB3/YidC family. Type 1 subfamily. In terms of assembly, interacts with the Sec translocase complex via SecD. Specifically interacts with transmembrane segments of nascent integral membrane proteins during membrane integration.

The protein resides in the cell inner membrane. Its function is as follows. Required for the insertion and/or proper folding and/or complex formation of integral membrane proteins into the membrane. Involved in integration of membrane proteins that insert both dependently and independently of the Sec translocase complex, as well as at least some lipoproteins. Aids folding of multispanning membrane proteins. This chain is Membrane protein insertase YidC, found in Xanthomonas euvesicatoria pv. vesicatoria (strain 85-10) (Xanthomonas campestris pv. vesicatoria).